A 459-amino-acid polypeptide reads, in one-letter code: Argininosuccinate lyase (459 aa).

Belongs to the lyase 1 family. Argininosuccinate lyase subfamily.

The protein resides in the cytoplasm. It catalyses the reaction 2-(N(omega)-L-arginino)succinate = fumarate + L-arginine. The protein operates within amino-acid biosynthesis; L-arginine biosynthesis; L-arginine from L-ornithine and carbamoyl phosphate: step 3/3. This Geobacillus thermodenitrificans (strain NG80-2) protein is Argininosuccinate lyase.